Here is a 123-residue protein sequence, read N- to C-terminus: Small ribosomal subunit protein uS12cz/uS12cy (123 aa).

This sequence belongs to the universal ribosomal protein uS12 family. Part of the 30S ribosomal subunit.

The protein resides in the plastid. It localises to the chloroplast. Its function is as follows. With S4 and S5 plays an important role in translational accuracy. Located at the interface of the 30S and 50S subunits. The polypeptide is Small ribosomal subunit protein uS12cz/uS12cy (rps12-A) (Eucalyptus globulus subsp. globulus (Tasmanian blue gum)).